Here is a 1166-residue protein sequence, read N- to C-terminus: MSGRRCAGGGAACASAGAEAVEPSARELFEACRNGDVERVKRLVTPEKVNSRDTAGRKSTPLHFAAGFGRKDVVEYLLQNGANVQARDDGGLIPLHNACSFGHAEVVNLLLQHGADPNARDNWNYTPLHEAAIKGKIDVCIVLLQHGAEPTIRNTDGRTALDLADPSAKAVLTGDYKKDELLESARSGNEEKMMALLTPLNVNCHASDGRKSTPLHLAAGYNRVKIVQLLLHHGADVHAKDKGDLVPLHNACSYGHYEVTELLVKHGACVNAMDLWQFTPLHEAASKNRIEVCSLLLSYGADPTLLNCHNKSAIDLAPTAQLKERLSYEFKGHSLLQAAREADVTRIKKHLSLEMVNFKHPQTHETALHCAAASPYPKRKQICELLLRKGANTNEKTKEFLTPLHVASENAHNDVVEVVVKHEAKVNALDSLGQTSLHRAAHCGHLQTCRLLLSYGCDPNIISLQGFTALQMGNENVQQLLQEGASLGHSEADRQLLEAAKAGDVETVKKLCTVQSVNCRDIEGRQSTPLHFAAGYNRVSVVEYLLQHGADVHAKDKGGLVPLHNACSYGHYEVAELLVKHGAVVNVADLWKFTPLHEAAAKGKYEICKLLLQHGADPTKKNRDGNTPLDLVKDGDTDIQDLLRGDAALLDAAKKGCLARVKKLSSPDNVNCRDTQGRHSTPLHLAAGYNNLEVAEYLLQHGADVNAQDKGGLIPLHNAASYGHVDVAALLIKYNACVNATDKWAFTPLHEAAQKGRTQLCALLLAHGADPTLKNQEGQTPLDLVSADDVSALLTAAMPPSALPTCYKPQVLSGVRGPGATADALSSGPSSPSSLSAASSLDNLSGSFSELSAVVSSSAAEGATGLQRKEDSGIDFSITQFIRNLGLEHLMDIFEREQITLDVLVEMGHKELKEIGINAYGHRHKLIKGVERLISGQQGLNPYLTLNNSGSGTILIDLSPDDKEFQSVEEEMQSTVREHRDGGHAGGVFNRYNILKIQKVCNKKLWERYTHRRKEVSEENHNHANERMLFHGSPFVNAIIHKGFDERHAYIGGMFGAGIYFAENSSKSNQYVYGIGGGTGCPIHKDRSCYICHRQLLFCRVTLGKSFLQFSAMKMAHSPPGHHSVTGRPSVNGLALAEYVIYRGEQAYPEYLITYQIVRPEGMVDG.

ANK repeat units lie at residues 23-52 (PSAR…VNSR), 57-86 (RKST…NVQA), 90-119 (GGLI…DPNA), and 123-152 (WNYT…EPTI). A (3S)-3-hydroxyasparagine; by HIF1AN modification is found at Asn203. ANK repeat units lie at residues 210–239 (RKST…DVHA), 243–272 (GDLV…CVNA), 276–305 (WQFT…DPTL), 363–395 (THET…NTNE), 399–428 (EFLT…KVNA), 432–461 (LGQT…DPNI), and 463–489 (SLQG…SLGH). His238 carries the (3S)-3-hydroxyhistidine; by HIF1AN modification. Asn271 bears the (3S)-3-hydroxyasparagine; by HIF1AN mark. Asn427 bears the (3S)-3-hydroxyasparagine; by HIF1AN mark. Asn518 carries the (3S)-3-hydroxyasparagine; by HIF1AN modification. ANK repeat units lie at residues 525-554 (RQST…DVHA), 558-587 (GGLV…VVNV), 591-620 (WKFT…DPTK), and 624-652 (DGNT…LLDA). The segment at 545-553 (LLQHGADVH) is HIF1AN-binding. Position 553 is a (3S)-3-hydroxyhistidine; by HIF1AN (His553). Position 586 is a (3S)-3-hydroxyasparagine; by HIF1AN (Asn586). Asn671, Asn706, and Asn739 each carry (3S)-3-hydroxyasparagine; by HIF1AN. 3 ANK repeats span residues 678–707 (RHST…DVNA), 711–740 (GGLI…CVNA), and 744–773 (WAFT…DPTL). One can recognise an SAM domain in the interval 873–936 (GIDFSITQFI…IKGVERLISG (64 aa)). Positions 959 to 1164 (SPDDKEFQSV…YQIVRPEGMV (206 aa)) constitute a PARP catalytic domain. Cys1081, His1084, Cys1089, and Cys1092 together coordinate Zn(2+).

Belongs to the ARTD/PARP family. In terms of assembly, oligomerizes and associates with TNKS. Interacts with the cytoplasmic domain of LNPEP/Otase in SLC2A4/GLUT4-vesicles. Binds to the N-terminus of Grb14 and TRF1 with its ankyrin repeat region. Interacts with HIF1AN. Interacts with RNF146; this interaction leads to ubiquitination and proteasomal degradation. Interacts with NUMA1. Ubiquitinated by RNF146 when auto-poly-ADP-ribosylated, leading to its degradation. Deubiquitinated by USP25; leading to stabilization. Post-translationally, ADP-ribosylated (-auto). Poly-ADP-ribosylated protein is recognized by RNF146, followed by ubiquitination.

It localises to the cytoplasm. The protein localises to the golgi apparatus membrane. It is found in the nucleus. The protein resides in the chromosome. Its subcellular location is the telomere. The enzyme catalyses NAD(+) + (ADP-D-ribosyl)n-acceptor = nicotinamide + (ADP-D-ribosyl)n+1-acceptor + H(+).. The catalysed reaction is L-aspartyl-[protein] + NAD(+) = 4-O-(ADP-D-ribosyl)-L-aspartyl-[protein] + nicotinamide. It carries out the reaction L-glutamyl-[protein] + NAD(+) = 5-O-(ADP-D-ribosyl)-L-glutamyl-[protein] + nicotinamide. Functionally, poly-ADP-ribosyltransferase involved in various processes such as Wnt signaling pathway, telomere length and vesicle trafficking. Acts as an activator of the Wnt signaling pathway by mediating poly-ADP-ribosylation of AXIN1 and AXIN2, 2 key components of the beta-catenin destruction complex: poly-ADP-ribosylated target proteins are recognized by RNF146, which mediates their ubiquitination and subsequent degradation. Also mediates poly-ADP-ribosylation of BLZF1 and CASC3, followed by recruitment of RNF146 and subsequent ubiquitination. Mediates poly-ADP-ribosylation of TERF1, thereby contributing to the regulation of telomere length. Stimulates 26S proteasome activity. This chain is Poly [ADP-ribose] polymerase tankyrase-2, found in Mus musculus (Mouse).